The sequence spans 691 residues: Elongation factor G (691 aa).

The tr-type G domain occupies 8 to 282 (ERVRNIGIAA…AVVDYLPAPI (275 aa)). GTP contacts are provided by residues 17 to 24 (AHIDAGKT), 81 to 85 (DTPGH), and 135 to 138 (NKMD).

It belongs to the TRAFAC class translation factor GTPase superfamily. Classic translation factor GTPase family. EF-G/EF-2 subfamily.

It localises to the cytoplasm. Functionally, catalyzes the GTP-dependent ribosomal translocation step during translation elongation. During this step, the ribosome changes from the pre-translocational (PRE) to the post-translocational (POST) state as the newly formed A-site-bound peptidyl-tRNA and P-site-bound deacylated tRNA move to the P and E sites, respectively. Catalyzes the coordinated movement of the two tRNA molecules, the mRNA and conformational changes in the ribosome. The polypeptide is Elongation factor G (Synechococcus sp. (strain WH7803)).